The following is a 264-amino-acid chain: Putative [LysW]-aminoadipate/[LysW]-glutamate kinase (264 aa).

Substrate contacts are provided by residues 34–35 (GG), Arg-61, and Asn-169.

It belongs to the acetylglutamate kinase family. LysZ subfamily.

It is found in the cytoplasm. The enzyme catalyses [amino-group carrier protein]-C-terminal-N-(1,4-dicarboxybutan-1-yl)-L-glutamine + ATP = [amino-group carrier protein]-C-terminal-N-(1-carboxy-5-phosphooxy-5-oxopentan-1-yl)-L-glutamine + ADP. The catalysed reaction is [amino-group carrier protein]-C-terminal-gamma-(L-glutamyl)-L-glutamate + ATP = [amino-group carrier protein]-C-terminal-gamma-(5-phospho-L-glutamyl)-L-glutamate + ADP. It functions in the pathway amino-acid biosynthesis; L-lysine biosynthesis via AAA pathway; L-lysine from L-alpha-aminoadipate (Thermus route): step 2/5. It participates in amino-acid biosynthesis; L-arginine biosynthesis. Involved in both the arginine and lysine biosynthetic pathways. Phosphorylates the LysW-bound precursors glutamate (for arginine biosynthesis), respectively alpha-aminoadipate (for lysine biosynthesis). In Ignicoccus hospitalis (strain KIN4/I / DSM 18386 / JCM 14125), this protein is Putative [LysW]-aminoadipate/[LysW]-glutamate kinase.